We begin with the raw amino-acid sequence, 404 residues long: MKLPIYLDYSATTPVDPRVAQKMADCLLVDGNFGNPASRSHVFGWKAEEAVENGRRQVAELINADPREIVWTSGATESDNLALKGVAHFYQTKGKHIITSKIEHKAVLDTARQLEREGFEVTYLEPGEDGIVTPAMVEAVLRDDTILVSLMHVNNEVGSINDIAAIGELTRSRGVLFHVDAAQSAGKVEIDLQKLKVDLMSFSAHKVYGPKGIGALYVSRKPRVRLEAIIHGGGHERGMRSGTLPTHQIVGMGEAFAIAKQEMVAENARIKALSDRFFKQVSNLEELYVNGSQTARVPHNLNLSFNYVEGESLLMSLKDIAVSSGSACTSASLEPSYVLRALGRNDELAHSSIRFSFGRFTTEEEVDYAAQKVCEAVNKLRELSPLWDMYKDGVDISKIEWAAH.

Residues 75-76 (AT), N155, Q183, and 203-205 (SAH) contribute to the pyridoxal 5'-phosphate site. The residue at position 206 (K206) is an N6-(pyridoxal phosphate)lysine. A pyridoxal 5'-phosphate-binding site is contributed by T243. C328 (cysteine persulfide intermediate) is an active-site residue. C328 contacts [2Fe-2S] cluster.

This sequence belongs to the class-V pyridoxal-phosphate-dependent aminotransferase family. NifS/IscS subfamily. In terms of assembly, homodimer. Forms a heterotetramer with IscU, interacts with other sulfur acceptors. It depends on pyridoxal 5'-phosphate as a cofactor.

It is found in the cytoplasm. It catalyses the reaction (sulfur carrier)-H + L-cysteine = (sulfur carrier)-SH + L-alanine. The protein operates within cofactor biosynthesis; iron-sulfur cluster biosynthesis. In terms of biological role, master enzyme that delivers sulfur to a number of partners involved in Fe-S cluster assembly, tRNA modification or cofactor biosynthesis. Catalyzes the removal of elemental sulfur atoms from cysteine to produce alanine. Functions as a sulfur delivery protein for Fe-S cluster synthesis onto IscU, an Fe-S scaffold assembly protein, as well as other S acceptor proteins. In Pseudomonas putida (strain ATCC 700007 / DSM 6899 / JCM 31910 / BCRC 17059 / LMG 24140 / F1), this protein is Cysteine desulfurase IscS.